A 200-amino-acid polypeptide reads, in one-letter code: dITP/XTP pyrophosphatase (200 aa).

Residue 8-13 (TRNAGK) coordinates substrate. Residue aspartate 72 is the Proton acceptor of the active site. Aspartate 72 contacts Mg(2+). Substrate contacts are provided by residues serine 73, 155 to 158 (FGYD), lysine 178, and 183 to 184 (HR).

Belongs to the HAM1 NTPase family. Homodimer. Requires Mg(2+) as cofactor.

It catalyses the reaction XTP + H2O = XMP + diphosphate + H(+). The catalysed reaction is dITP + H2O = dIMP + diphosphate + H(+). It carries out the reaction ITP + H2O = IMP + diphosphate + H(+). Its function is as follows. Pyrophosphatase that catalyzes the hydrolysis of nucleoside triphosphates to their monophosphate derivatives, with a high preference for the non-canonical purine nucleotides XTP (xanthosine triphosphate), dITP (deoxyinosine triphosphate) and ITP. Seems to function as a house-cleaning enzyme that removes non-canonical purine nucleotides from the nucleotide pool, thus preventing their incorporation into DNA/RNA and avoiding chromosomal lesions. The protein is dITP/XTP pyrophosphatase of Streptomyces avermitilis (strain ATCC 31267 / DSM 46492 / JCM 5070 / NBRC 14893 / NCIMB 12804 / NRRL 8165 / MA-4680).